Consider the following 483-residue polypeptide: Phosphoglucosamine mutase (483 aa).

Ser131 functions as the Phosphoserine intermediate in the catalytic mechanism. Mg(2+)-binding residues include Ser131, Asp272, Asp274, and Asp276. Ser131 bears the Phosphoserine mark.

This sequence belongs to the phosphohexose mutase family. Requires Mg(2+) as cofactor. In terms of processing, activated by phosphorylation.

It carries out the reaction alpha-D-glucosamine 1-phosphate = D-glucosamine 6-phosphate. In terms of biological role, catalyzes the conversion of glucosamine-6-phosphate to glucosamine-1-phosphate. The protein is Phosphoglucosamine mutase of Magnetococcus marinus (strain ATCC BAA-1437 / JCM 17883 / MC-1).